An 88-amino-acid polypeptide reads, in one-letter code: Small ribosomal subunit protein bS20 (88 aa).

The segment at 1-26 is disordered; it reads MANTAQARKRARQNTKRRQNSASQRS. The segment covering 7–19 has biased composition (basic residues); it reads ARKRARQNTKRRQ.

It belongs to the bacterial ribosomal protein bS20 family.

Binds directly to 16S ribosomal RNA. This is Small ribosomal subunit protein bS20 from Psychrobacter cryohalolentis (strain ATCC BAA-1226 / DSM 17306 / VKM B-2378 / K5).